Reading from the N-terminus, the 1343-residue chain is DNA-directed RNA polymerase subunit beta (1343 aa).

It belongs to the RNA polymerase beta chain family. The RNAP catalytic core consists of 2 alpha, 1 beta, 1 beta' and 1 omega subunit. When a sigma factor is associated with the core the holoenzyme is formed, which can initiate transcription.

The catalysed reaction is RNA(n) + a ribonucleoside 5'-triphosphate = RNA(n+1) + diphosphate. Its function is as follows. DNA-dependent RNA polymerase catalyzes the transcription of DNA into RNA using the four ribonucleoside triphosphates as substrates. The polypeptide is DNA-directed RNA polymerase subunit beta (Shewanella violacea).